Here is a 180-residue protein sequence, read N- to C-terminus: Oligoribonuclease (180 aa).

The Exonuclease domain maps to 7–170 (LIWIDLEMTG…DDIRESLAEL (164 aa)). Tyr-128 is a catalytic residue.

This sequence belongs to the oligoribonuclease family.

It localises to the cytoplasm. Functionally, 3'-to-5' exoribonuclease specific for small oligoribonucleotides. The protein is Oligoribonuclease of Pectobacterium atrosepticum (strain SCRI 1043 / ATCC BAA-672) (Erwinia carotovora subsp. atroseptica).